A 1043-amino-acid polypeptide reads, in one-letter code: RNA cytidine acetyltransferase (1043 aa).

ATP-binding positions include 285–294 (GRGKSAAVGL) and R462. The N-acetyltransferase domain maps to 551-736 (VLMAPIDKSR…VPVYIRQNSN (186 aa)). Acetyl-CoA contacts are provided by residues 622–624 (VAV), 629–635 (QSMGYGG), and R723. Positions 1020–1043 (IPDAKDPANKNAKKKKRFSSGGRR) are disordered. Residues 1030–1043 (NAKKKKRFSSGGRR) are compositionally biased toward basic residues.

Belongs to the RNA cytidine acetyltransferase family. NAT10 subfamily. Part of the small subunit (SSU) processome, composed of more than 70 proteins and the RNA chaperone small nucleolar RNA (snoRNA) U3.

It is found in the nucleus. The protein resides in the nucleolus. The catalysed reaction is a cytidine in 18S rRNA + acetyl-CoA + ATP + H2O = an N(4)-acetylcytidine in 18S rRNA + ADP + phosphate + CoA + H(+). The enzyme catalyses a cytidine in tRNA + acetyl-CoA + ATP + H2O = an N(4)-acetylcytidine in tRNA + ADP + phosphate + CoA + H(+). RNA cytidine acetyltransferase with specificity toward both 18S rRNA and tRNAs. Catalyzes the formation of N(4)-acetylcytidine (ac4C) in 18S rRNA. Required for early nucleolar cleavages of precursor rRNA at sites A0, A1 and A2 during 18S rRNA synthesis. Catalyzes the formation of ac4C in serine and leucine tRNAs. Requires a tRNA-binding adapter protein for full tRNA acetyltransferase activity but not for 18S rRNA acetylation. Part of the small subunit (SSU) processome, first precursor of the small eukaryotic ribosomal subunit. During the assembly of the SSU processome in the nucleolus, many ribosome biogenesis factors, an RNA chaperone and ribosomal proteins associate with the nascent pre-rRNA and work in concert to generate RNA folding, modifications, rearrangements and cleavage as well as targeted degradation of pre-ribosomal RNA by the RNA exosome. The protein is RNA cytidine acetyltransferase of Caenorhabditis elegans.